A 74-amino-acid chain; its full sequence is Toxin Td6 (74 aa).

An N-terminal signal peptide occupies residues 1 to 8; it reads IGMIVECE. Positions 9 to 71 constitute an LCN-type CS-alpha/beta domain; that stretch reads KEGYLMEANG…IWDSATNTCG (63 aa). 4 disulfides stabilise this stretch: C19/C70, C23/C45, C31/C51, and C35/C53. R72 carries the arginine amide modification.

This sequence belongs to the long (4 C-C) scorpion toxin superfamily. Sodium channel inhibitor family. Beta subfamily. As to expression, expressed by the venom gland.

The protein resides in the secreted. Functionally, beta toxins bind voltage-independently at site-4 of sodium channels (Nav) and shift the voltage of activation toward more negative potentials thereby affecting sodium channel activation and promoting spontaneous and repetitive firing. The sequence is that of Toxin Td6 from Tityus discrepans (Venezuelan scorpion).